Reading from the N-terminus, the 152-residue chain is D-aminoacyl-tRNA deacylase (152 aa).

A Gly-cisPro motif, important for rejection of L-amino acids motif is present at residues 137–138 (GP).

It belongs to the DTD family. In terms of assembly, homodimer.

The protein resides in the cytoplasm. The enzyme catalyses glycyl-tRNA(Ala) + H2O = tRNA(Ala) + glycine + H(+). The catalysed reaction is a D-aminoacyl-tRNA + H2O = a tRNA + a D-alpha-amino acid + H(+). Functionally, an aminoacyl-tRNA editing enzyme that deacylates mischarged D-aminoacyl-tRNAs. Also deacylates mischarged glycyl-tRNA(Ala), protecting cells against glycine mischarging by AlaRS. Acts via tRNA-based rather than protein-based catalysis; rejects L-amino acids rather than detecting D-amino acids in the active site. By recycling D-aminoacyl-tRNA to D-amino acids and free tRNA molecules, this enzyme counteracts the toxicity associated with the formation of D-aminoacyl-tRNA entities in vivo and helps enforce protein L-homochirality. The chain is D-aminoacyl-tRNA deacylase from Thermus aquaticus.